The primary structure comprises 1969 residues: Myosin-3 (1969 aa).

The Myosin N-terminal SH3-like domain occupies 33-82; the sequence is DSKKNCWIPDPEDGFVAAEIQSTTGDQVTVVTVKGNQITVKKDQCQEMNP. The region spanning 86–791 is the Myosin motor domain; the sequence is DKTEDMANLT…VLAKLEDLRD (706 aa). An N6,N6,N6-trimethyllysine modification is found at lysine 130. 179–186 is a binding site for ATP; that stretch reads GESGAGKT. Actin-binding stretches follow at residues 667-689 and 770-784; these read LNNLMNMLYQTHPHFIRCIIPNE and KIGETKIFFKAGVLA. The 30-residue stretch at 794 to 823 folds into the IQ domain; it reads LSRIVTMFQSRIRSYLAKAEVRRRYEQQTG. A coiled-coil region spans residues 853 to 1941; sequence LKAGKEQEAM…KMRNKIRASA (1089 aa). Disordered regions lie at residues 943–967, 993–1029, and 1134–1153; these read QERHEDLTRQKKKTEQELSDTKKHV, DEMANQDESVAKLNKEKKHQEESNRKLNEDLQSEEDK, and ELESERNSRQKADRTRNELQ. 2 stretches are compositionally biased toward basic and acidic residues: residues 1001 to 1029 and 1137 to 1153; these read SVAKLNKEKKHQEESNRKLNEDLQSEEDK and SERNSRQKADRTRNELQ.

The protein belongs to the TRAFAC class myosin-kinesin ATPase superfamily. Myosin family. In terms of assembly, muscle myosin is a hexameric protein that consists of 2 heavy chain subunits (MHC), 2 alkali light chain subunits (MLC) and 2 regulatory light chain subunits (MLC-2).

The protein resides in the cytoplasm. Its subcellular location is the myofibril. The protein localises to the sarcomere. It is found in the a band. In terms of biological role, essential for muscle contraction. Involved in ovulation likely by regulating the contraction of gonadal myoepithelial sheath cells. The chain is Myosin-3 from Caenorhabditis briggsae.